Consider the following 468-residue polypeptide: Probable citrate synthase, mitochondrial (468 aa).

Active-site residues include His303, His349, and Asp404.

The protein belongs to the citrate synthase family. As to quaternary structure, homodimer.

Its subcellular location is the mitochondrion matrix. The catalysed reaction is oxaloacetate + acetyl-CoA + H2O = citrate + CoA + H(+). Its pathway is carbohydrate metabolism; tricarboxylic acid cycle; isocitrate from oxaloacetate: step 1/2. This is Probable citrate synthase, mitochondrial (cts-1) from Caenorhabditis briggsae.